Reading from the N-terminus, the 504-residue chain is Probable cytosol aminopeptidase (504 aa).

Positions 263 and 268 each coordinate Mn(2+). Lys275 is a catalytic residue. 3 residues coordinate Mn(2+): Asp286, Asp345, and Glu347. Arg349 is a catalytic residue.

It belongs to the peptidase M17 family. The cofactor is Mn(2+).

The protein localises to the cytoplasm. The catalysed reaction is Release of an N-terminal amino acid, Xaa-|-Yaa-, in which Xaa is preferably Leu, but may be other amino acids including Pro although not Arg or Lys, and Yaa may be Pro. Amino acid amides and methyl esters are also readily hydrolyzed, but rates on arylamides are exceedingly low.. The enzyme catalyses Release of an N-terminal amino acid, preferentially leucine, but not glutamic or aspartic acids.. Its function is as follows. Presumably involved in the processing and regular turnover of intracellular proteins. Catalyzes the removal of unsubstituted N-terminal amino acids from various peptides. This Sulfurihydrogenibium sp. (strain YO3AOP1) protein is Probable cytosol aminopeptidase.